The chain runs to 113 residues: rRNA-processing protein cgrA (113 aa).

The span at Met-1–Met-15 shows a compositional bias: polar residues. A disordered region spans residues Met-1–Ser-113. Positions Ser-37–Arg-100 form a coiled coil. Residues Tyr-38–Lys-92 show a composition bias toward basic and acidic residues. The segment covering Met-93–Ser-113 has biased composition (basic residues).

This sequence belongs to the CGR1 family.

It is found in the nucleus. The protein localises to the nucleolus. Its function is as follows. Involved in nucleolar integrity and required for processing of the pre-rRNA for the 60S ribosome subunit. This Aspergillus clavatus (strain ATCC 1007 / CBS 513.65 / DSM 816 / NCTC 3887 / NRRL 1 / QM 1276 / 107) protein is rRNA-processing protein cgrA (cgrA).